Here is a 142-residue protein sequence, read N- to C-terminus: Large ribosomal subunit protein uL13 (142 aa).

It belongs to the universal ribosomal protein uL13 family. Part of the 50S ribosomal subunit.

This protein is one of the early assembly proteins of the 50S ribosomal subunit, although it is not seen to bind rRNA by itself. It is important during the early stages of 50S assembly. The sequence is that of Large ribosomal subunit protein uL13 from Pyrococcus horikoshii (strain ATCC 700860 / DSM 12428 / JCM 9974 / NBRC 100139 / OT-3).